Here is a 390-residue protein sequence, read N- to C-terminus: Putative MSV199 domain-containing protein 211L (390 aa).

Residues 181–263 (HDRKAQEEKE…FDLSDVRDRL (83 aa)) are a coiled coil.

This chain is Putative MSV199 domain-containing protein 211L, found in Acheta domesticus (House cricket).